Here is a 253-residue protein sequence, read N- to C-terminus: Pimeloyl-[acyl-carrier protein] methyl ester esterase (253 aa).

Substrate contacts are provided by residues Trp-18, 78–79 (SL), and 139–143 (FLALD). Ser-78 (nucleophile) is an active-site residue. Residues Asp-203 and His-231 contribute to the active site. His-231 contributes to the substrate binding site.

This sequence belongs to the AB hydrolase superfamily. Carboxylesterase BioH family. In terms of assembly, monomer.

It localises to the cytoplasm. The catalysed reaction is 6-carboxyhexanoyl-[ACP] methyl ester + H2O = 6-carboxyhexanoyl-[ACP] + methanol + H(+). The protein operates within cofactor biosynthesis; biotin biosynthesis. In terms of biological role, the physiological role of BioH is to remove the methyl group introduced by BioC when the pimeloyl moiety is complete. It allows to synthesize pimeloyl-ACP via the fatty acid synthetic pathway through the hydrolysis of the ester bonds of pimeloyl-ACP esters. This is Pimeloyl-[acyl-carrier protein] methyl ester esterase from Xanthomonas oryzae pv. oryzae (strain MAFF 311018).